Consider the following 455-residue polypeptide: SVGFKAGVKDYKLTYYTPDYKTKDTDILAAFRVTPQPGVPPEEAGAAVAAESSTGTWTTVWTDGLTSLDRYKGRCYHIEPVAGEESQFIAYVAYPLDLFEEGSVTNMFTSIVGNVFGFKALRALRLEDLRIPNAYVKTFQGPPHGIQVERDKLNKYGRPLLGCTIKPKLGLSAKNYGRAVYECLRGGLDFTKDDENVNSQPFMRWRDRFLFCAEALYKAQAETGEIKGHYLNATAGTCEEMIKRAVFARELGVPIVMHDYLTGGFTANTTLSHYCRDNGLLLHIHRAMHAVIDRQKNHGMHFRVLAKALRLSGGDHIHSGTVVGKLEGEREITLGFVDLLRDDFVEKDRSRGIYFTQDWVSLPGVLPVASGGIHVWHMPALTEIFGDDSVLQFGGGTLGHPWGNAPGAVANRVALEACVQARNEGRDLASEGNQIIREASKWSPELAAACEVWKE.

Lys-5 is subject to N6,N6,N6-trimethyllysine. Residues Asn-114 and Thr-164 each contribute to the substrate site. The active-site Proton acceptor is Lys-166. Lys-168 contacts substrate. 3 residues coordinate Mg(2+): Lys-192, Asp-194, and Glu-195. Lys-192 carries the N6-carboxylysine modification. The active-site Proton acceptor is His-285. 3 residues coordinate substrate: Arg-286, His-318, and Ser-370.

Belongs to the RuBisCO large chain family. Type I subfamily. Heterohexadecamer of 8 large chains and 8 small chains; disulfide-linked. The disulfide link is formed within the large subunit homodimers. Mg(2+) serves as cofactor. The disulfide bond which can form in the large chain dimeric partners within the hexadecamer appears to be associated with oxidative stress and protein turnover.

Its subcellular location is the plastid. It localises to the chloroplast. It carries out the reaction 2 (2R)-3-phosphoglycerate + 2 H(+) = D-ribulose 1,5-bisphosphate + CO2 + H2O. The enzyme catalyses D-ribulose 1,5-bisphosphate + O2 = 2-phosphoglycolate + (2R)-3-phosphoglycerate + 2 H(+). RuBisCO catalyzes two reactions: the carboxylation of D-ribulose 1,5-bisphosphate, the primary event in carbon dioxide fixation, as well as the oxidative fragmentation of the pentose substrate in the photorespiration process. Both reactions occur simultaneously and in competition at the same active site. The protein is Ribulose bisphosphate carboxylase large chain of Lupinus arcticus (Arctic lupine).